We begin with the raw amino-acid sequence, 614 residues long: Sodium- and chloride-dependent betaine transporter (614 aa).

At 1 to 44 (MDRKVTVHEDGCPVVSWVPEEGEMMDQKDKDQVKDRGQWTNKME) the chain is on the cytoplasmic side. Helical transmembrane passes span 45 to 65 (FVLS…FPYL), 73 to 92 (AFFI…VFFL), and 117 to 137 (GIGM…IIIL). Topologically, residues 138 to 210 (AWALFYLFSS…SGIHDLGSLR (73 aa)) are extracellular. N-linked (GlcNAc...) asparagine glycans are attached at residues N171 and N183. 9 helical membrane passes run 211–229 (WELA…FCIW), 238–255 (VVYF…ILLI), 291–308 (IFFS…LGSY), 320–341 (IALC…FSIL), 374–393 (MPLS…FLGL), 423–441 (LLIL…LLVT), 458–478 (GICL…VYGA), 499–518 (ISWL…FSLS), and 538–556 (IGWL…FIII). Over 557-614 (TLLKTQGSFKKRLQRLITPDPSLPQPGRRSPQDGSSAQNCSTSPVKQELIAWEKETHL) the chain is Cytoplasmic. Residues 574 to 600 (TPDPSLPQPGRRSPQDGSSAQNCSTSP) form a disordered region. A Phosphoserine modification is found at S586. Positions 588–600 (QDGSSAQNCSTSP) are enriched in polar residues.

The protein belongs to the sodium:neurotransmitter symporter (SNF) (TC 2.A.22) family. SLC6A12 subfamily. Interacts with LIN7C.

Its subcellular location is the basolateral cell membrane. It is found in the cell membrane. The enzyme catalyses 4-aminobutanoate(out) + chloride(out) + 3 Na(+)(out) = 4-aminobutanoate(in) + chloride(in) + 3 Na(+)(in). The catalysed reaction is glycine betaine(out) + 2 chloride(out) + 3 Na(+)(out) = glycine betaine(in) + 2 chloride(in) + 3 Na(+)(in). Functionally, transporter that mediates cellular uptake of betaine and GABA in a sodium- and chloride-dependent process. May have a role in regulation of GABAergic transmission in the brain through the reuptake of GABA into presynaptic terminals, as well as in osmotic regulation. Probably also involved in renal and hepatic osmotic regulation. This is Sodium- and chloride-dependent betaine transporter (Slc6a12) from Rattus norvegicus (Rat).